A 345-amino-acid chain; its full sequence is Phosphate acyltransferase (345 aa).

This sequence belongs to the PlsX family. As to quaternary structure, homodimer. Probably interacts with PlsY.

The protein resides in the cytoplasm. It carries out the reaction a fatty acyl-[ACP] + phosphate = an acyl phosphate + holo-[ACP]. Its pathway is lipid metabolism; phospholipid metabolism. In terms of biological role, catalyzes the reversible formation of acyl-phosphate (acyl-PO(4)) from acyl-[acyl-carrier-protein] (acyl-ACP). This enzyme utilizes acyl-ACP as fatty acyl donor, but not acyl-CoA. This chain is Phosphate acyltransferase, found in Wolbachia pipientis subsp. Culex pipiens (strain wPip).